Here is a 177-residue protein sequence, read N- to C-terminus: tRNA-splicing endonuclease (177 aa).

Catalysis depends on residues Tyr-114, His-123, and Lys-154.

Belongs to the tRNA-intron endonuclease family. Archaeal short subfamily. As to quaternary structure, homotetramer; although the tetramer contains four active sites, only two participate in the cleavage. Therefore, it should be considered as a dimer of dimers.

The catalysed reaction is pretRNA = a 3'-half-tRNA molecule with a 5'-OH end + a 5'-half-tRNA molecule with a 2',3'-cyclic phosphate end + an intron with a 2',3'-cyclic phosphate and a 5'-hydroxyl terminus.. In terms of biological role, endonuclease that removes tRNA introns. Cleaves pre-tRNA at the 5'- and 3'-splice sites to release the intron. The products are an intron and two tRNA half-molecules bearing 2',3' cyclic phosphate and 5'-OH termini. Recognizes a pseudosymmetric substrate in which 2 bulged loops of 3 bases are separated by a stem of 4 bp. This chain is tRNA-splicing endonuclease, found in Methanococcus maripaludis (strain DSM 14266 / JCM 13030 / NBRC 101832 / S2 / LL).